Here is a 430-residue protein sequence, read N- to C-terminus: Tektin-2 (430 aa).

2 coiled-coil regions span residues 82–160 (LTDL…QAFE) and 273–379 (EKVY…DIAC).

The protein belongs to the tektin family. Microtubule inner protein component of sperm flagellar doublet microtubules. May interact with CCDC172. In terms of processing, tyrosine phosphorylated. Ubiquitinated, leading to its degradation. Deubiquitinated by USP16, promoting its stability.

Its subcellular location is the cytoplasm. The protein localises to the cytoskeleton. The protein resides in the cilium axoneme. It localises to the flagellum axoneme. It is found in the microtubule organizing center. Microtubule inner protein (MIP) part of the dynein-decorated doublet microtubules (DMTs) in cilia and flagellar axoneme. Plays a key role in the assembly or attachment of the inner dynein arm to microtubules in sperm flagella and tracheal cilia. Forms filamentous polymers in the walls of ciliary and flagellar microtubules. This is Tektin-2 (TEKT2) from Macaca fascicularis (Crab-eating macaque).